The sequence spans 260 residues: Triosephosphate isomerase (260 aa).

Position 10–12 (10–12 (NWK)) interacts with substrate. The active-site Electrophile is His100. The active-site Proton acceptor is the Glu172. Substrate contacts are provided by residues Gly178, Ser218, and 239 to 240 (GG).

It belongs to the triosephosphate isomerase family. Homodimer.

It is found in the cytoplasm. The enzyme catalyses D-glyceraldehyde 3-phosphate = dihydroxyacetone phosphate. The protein operates within carbohydrate biosynthesis; gluconeogenesis. It participates in carbohydrate degradation; glycolysis; D-glyceraldehyde 3-phosphate from glycerone phosphate: step 1/1. Involved in the gluconeogenesis. Catalyzes stereospecifically the conversion of dihydroxyacetone phosphate (DHAP) to D-glyceraldehyde-3-phosphate (G3P). This is Triosephosphate isomerase from Corynebacterium diphtheriae (strain ATCC 700971 / NCTC 13129 / Biotype gravis).